The primary structure comprises 99 residues: Plastocyanin (99 aa).

The region spanning 1-99 (IEVLLGGDDG…AGMVGKVTVN (99 aa)) is the Plastocyanin-like domain. Cu cation contacts are provided by H37, C84, H87, and M92.

This sequence belongs to the plastocyanin family. Requires Cu(2+) as cofactor.

It is found in the plastid. Its subcellular location is the chloroplast thylakoid membrane. Functionally, participates in electron transfer between P700 and the cytochrome b6-f complex in photosystem I. This chain is Plastocyanin (PETE), found in Cucurbita pepo (Vegetable marrow).